A 379-amino-acid polypeptide reads, in one-letter code: Chaperone protein DnaJ (379 aa).

A J domain is found at 5–70 (DYYELLEVSR…QKRAAYDQFG (66 aa)). The CR-type zinc finger occupies 135 to 213 (GKEVEITVPR…CHGQGRVRES (79 aa)). The Zn(2+) site is built by C148, C151, C165, C168, C187, C190, C201, and C204. CXXCXGXG motif repeat units follow at residues 148–155 (CTVCEGSG), 165–172 (CETCQGMG), 187–194 (CPTCHGEG), and 201–208 (CASCHGQG).

Belongs to the DnaJ family. In terms of assembly, homodimer. It depends on Zn(2+) as a cofactor.

It is found in the cytoplasm. Functionally, participates actively in the response to hyperosmotic and heat shock by preventing the aggregation of stress-denatured proteins and by disaggregating proteins, also in an autonomous, DnaK-independent fashion. Unfolded proteins bind initially to DnaJ; upon interaction with the DnaJ-bound protein, DnaK hydrolyzes its bound ATP, resulting in the formation of a stable complex. GrpE releases ADP from DnaK; ATP binding to DnaK triggers the release of the substrate protein, thus completing the reaction cycle. Several rounds of ATP-dependent interactions between DnaJ, DnaK and GrpE are required for fully efficient folding. Also involved, together with DnaK and GrpE, in the DNA replication of plasmids through activation of initiation proteins. This Legionella pneumophila (strain Lens) protein is Chaperone protein DnaJ.